The sequence spans 97 residues: UPF0235 protein DET1292 (97 aa).

It belongs to the UPF0235 family.

This Dehalococcoides mccartyi (strain ATCC BAA-2266 / KCTC 15142 / 195) (Dehalococcoides ethenogenes (strain 195)) protein is UPF0235 protein DET1292.